A 767-amino-acid chain; its full sequence is Photosystem I P700 chlorophyll a apoprotein A1 (767 aa).

The next 8 helical transmembrane spans lie at 72–95 (IFSA…FHGA), 158–181 (LMAL…FHYH), 197–221 (LNHH…HVSA), 305–323 (IAHH…GHMY), 364–387 (WHAQ…QHMY), 403–429 (IGLF…IAMV), 451–473 (AIIS…LYIH), and 548–566 (FMVH…LILL). C590 and C599 together coordinate [4Fe-4S] cluster. The next 2 helical transmembrane spans lie at 606–627 (HVFL…HFSW) and 681–703 (TAAY…MFLF). H692 lines the chlorophyll a' pocket. Residues M700 and Y708 each coordinate chlorophyll a. Residue W709 participates in phylloquinone binding. A helical membrane pass occupies residues 741-761 (AVGVAHYLLGGIATTWAFFHA).

The protein belongs to the PsaA/PsaB family. As to quaternary structure, the PsaA/B heterodimer binds the P700 chlorophyll special pair and subsequent electron acceptors. PSI consists of a core antenna complex that captures photons, and an electron transfer chain that converts photonic excitation into a charge separation. The cyanobacterial PSI reaction center is composed of one copy each of PsaA,B,C,D,E,F,I,J,K,L,M and X, and forms trimeric complexes. The cofactor is PSI electron transfer chain: 5 chlorophyll a, 1 chlorophyll a', 2 phylloquinones and 3 4Fe-4S clusters. PSI core antenna: 90 chlorophyll a, 22 carotenoids, 3 phospholipids and 1 galactolipid. P700 is a chlorophyll a/chlorophyll a' dimer, A0 is one or more chlorophyll a, A1 is one or both phylloquinones and FX is a shared 4Fe-4S iron-sulfur center..

The protein resides in the cellular thylakoid membrane. It catalyses the reaction reduced [plastocyanin] + hnu + oxidized [2Fe-2S]-[ferredoxin] = oxidized [plastocyanin] + reduced [2Fe-2S]-[ferredoxin]. Its function is as follows. PsaA and PsaB bind P700, the primary electron donor of photosystem I (PSI), as well as the electron acceptors A0, A1 and FX. PSI is a plastocyanin/cytochrome c6-ferredoxin oxidoreductase, converting photonic excitation into a charge separation, which transfers an electron from the donor P700 chlorophyll pair to the spectroscopically characterized acceptors A0, A1, FX, FA and FB in turn. Oxidized P700 is reduced on the lumenal side of the thylakoid membrane by plastocyanin or cytochrome c6. This Synechococcus sp. (strain CC9605) protein is Photosystem I P700 chlorophyll a apoprotein A1.